Reading from the N-terminus, the 118-residue chain is NADH-quinone oxidoreductase subunit A 2 (118 aa).

3 helical membrane passes run 5–25, 62–82, and 87–107; these read YLPILVLVVIAVLFGLGSVIF, LIAMLFILFDIEAVFLYPWAV, and LGMFGLIEMGVFIVILFVGYV.

It belongs to the complex I subunit 3 family. NDH-1 is composed of 14 different subunits. Subunits NuoA, H, J, K, L, M, N constitute the membrane sector of the complex.

It localises to the cell inner membrane. The catalysed reaction is a quinone + NADH + 5 H(+)(in) = a quinol + NAD(+) + 4 H(+)(out). Functionally, NDH-1 shuttles electrons from NADH, via FMN and iron-sulfur (Fe-S) centers, to quinones in the respiratory chain. The immediate electron acceptor for the enzyme in this species is believed to be ubiquinone. Couples the redox reaction to proton translocation (for every two electrons transferred, four hydrogen ions are translocated across the cytoplasmic membrane), and thus conserves the redox energy in a proton gradient. The chain is NADH-quinone oxidoreductase subunit A 2 from Citrifermentans bemidjiense (strain ATCC BAA-1014 / DSM 16622 / JCM 12645 / Bem) (Geobacter bemidjiensis).